A 209-amino-acid chain; its full sequence is Small ribosomal subunit protein uS4 (209 aa).

In terms of domain architecture, S4 RNA-binding spans 99–164 (TRLDNVVYRM…IPRVQELKEL (66 aa)).

Belongs to the universal ribosomal protein uS4 family. Part of the 30S ribosomal subunit. Contacts protein S5. The interaction surface between S4 and S5 is involved in control of translational fidelity.

One of the primary rRNA binding proteins, it binds directly to 16S rRNA where it nucleates assembly of the body of the 30S subunit. Its function is as follows. With S5 and S12 plays an important role in translational accuracy. The chain is Small ribosomal subunit protein uS4 from Natranaerobius thermophilus (strain ATCC BAA-1301 / DSM 18059 / JW/NM-WN-LF).